The primary structure comprises 482 residues: Glutamyl-tRNA(Gln) amidotransferase subunit A (482 aa).

Residues Lys-74 and Ser-149 each act as charge relay system in the active site. Ser-173 functions as the Acyl-ester intermediate in the catalytic mechanism.

This sequence belongs to the amidase family. GatA subfamily. Heterotrimer of A, B and C subunits.

The catalysed reaction is L-glutamyl-tRNA(Gln) + L-glutamine + ATP + H2O = L-glutaminyl-tRNA(Gln) + L-glutamate + ADP + phosphate + H(+). In terms of biological role, allows the formation of correctly charged Gln-tRNA(Gln) through the transamidation of misacylated Glu-tRNA(Gln) in organisms which lack glutaminyl-tRNA synthetase. The reaction takes place in the presence of glutamine and ATP through an activated gamma-phospho-Glu-tRNA(Gln). This chain is Glutamyl-tRNA(Gln) amidotransferase subunit A, found in Prochlorococcus marinus (strain AS9601).